We begin with the raw amino-acid sequence, 282 residues long: 2-dehydro-3-deoxyphosphooctonate aldolase (282 aa).

Belongs to the KdsA family.

The protein resides in the cytoplasm. It catalyses the reaction D-arabinose 5-phosphate + phosphoenolpyruvate + H2O = 3-deoxy-alpha-D-manno-2-octulosonate-8-phosphate + phosphate. It participates in carbohydrate biosynthesis; 3-deoxy-D-manno-octulosonate biosynthesis; 3-deoxy-D-manno-octulosonate from D-ribulose 5-phosphate: step 2/3. Its pathway is bacterial outer membrane biogenesis; lipopolysaccharide biosynthesis. In Bartonella bacilliformis (strain ATCC 35685 / KC583 / Herrer 020/F12,63), this protein is 2-dehydro-3-deoxyphosphooctonate aldolase.